Reading from the N-terminus, the 442-residue chain is Transcription factor AP-2-epsilon (442 aa).

Residues 54–59 (YFPPPY) carry the PPxY motif motif. At S246 the chain carries Phosphoserine; by PKA. An H-S-H (helix-span-helix), dimerization region spans residues 287–417 (RRKAANVTLL…YLLESLKGLD (131 aa)).

It belongs to the AP-2 family. In terms of assembly, binds DNA as a dimer. Can form homodimers or heterodimers with other AP-2 family members. In terms of tissue distribution, expressed in skin, primary keratinocytes, immortalized keratinocytes, and HeLa cell line.

It is found in the nucleus. In terms of biological role, sequence-specific DNA-binding protein that interacts with inducible viral and cellular enhancer elements to regulate transcription of selected genes. AP-2 factors bind to the consensus sequence 5'-GCCNNNGGC-3' and activate genes involved in a large spectrum of important biological functions including proper eye, face, body wall, limb and neural tube development. They also suppress a number of genes including MCAM/MUC18, C/EBP alpha and MYC. AP-2-epsilon may play a role in the development of the CNS and in cartilage differentiation. This chain is Transcription factor AP-2-epsilon, found in Homo sapiens (Human).